A 125-amino-acid polypeptide reads, in one-letter code: Succinate dehydrogenase assembly factor 3, mitochondrial (125 aa).

Residues 1-30 constitute a mitochondrion transit peptide; the sequence is MPGRHVSRVRALYKRVLQLHRVLPPDLKSL.

It belongs to the complex I LYR family. SDHAF3 subfamily. As to quaternary structure, interacts with SDHB within an SDHA-SDHB subcomplex.

It is found in the mitochondrion matrix. Functionally, plays an essential role in the assembly of succinate dehydrogenase (SDH), an enzyme complex (also referred to as respiratory complex II) that is a component of both the tricarboxylic acid (TCA) cycle and the mitochondrial electron transport chain, and which couples the oxidation of succinate to fumarate with the reduction of ubiquinone (coenzyme Q) to ubiquinol. Promotes maturation of the iron-sulfur protein subunit SDHB of the SDH catalytic dimer, protecting it from the deleterious effects of oxidants. May act together with SDHAF1. The polypeptide is Succinate dehydrogenase assembly factor 3, mitochondrial (Homo sapiens (Human)).